The following is a 429-amino-acid chain: Glucose-1-phosphate adenylyltransferase (429 aa).

Alpha-D-glucose 1-phosphate-binding positions include glycine 162, 177–178 (EK), and serine 209.

It belongs to the bacterial/plant glucose-1-phosphate adenylyltransferase family. In terms of assembly, homotetramer.

It catalyses the reaction alpha-D-glucose 1-phosphate + ATP + H(+) = ADP-alpha-D-glucose + diphosphate. It participates in glycan biosynthesis; glycogen biosynthesis. In terms of biological role, involved in the biosynthesis of ADP-glucose, a building block required for the elongation reactions to produce glycogen. Catalyzes the reaction between ATP and alpha-D-glucose 1-phosphate (G1P) to produce pyrophosphate and ADP-Glc. The chain is Glucose-1-phosphate adenylyltransferase from Rippkaea orientalis (strain PCC 8801 / RF-1) (Cyanothece sp. (strain PCC 8801)).